A 62-amino-acid chain; its full sequence is MDMKKLIERINFLYKKSKEEGLTKEEKVEQQKLRREYIDIIKGNVKVQLEGVEKIPTPNRKN.

The protein belongs to the UPF0291 family.

It localises to the cytoplasm. This Clostridium botulinum (strain Okra / Type B1) protein is UPF0291 protein CLD_1956.